The primary structure comprises 272 residues: Putative hydro-lyase BBta_2883 (272 aa).

Belongs to the D-glutamate cyclase family.

This is Putative hydro-lyase BBta_2883 from Bradyrhizobium sp. (strain BTAi1 / ATCC BAA-1182).